Reading from the N-terminus, the 395-residue chain is Elongation factor Tu (395 aa).

In terms of domain architecture, tr-type G spans K10–E204. The interval G19–T26 is G1. GTP is bound at residue G19 to T26. T26 is a Mg(2+) binding site. Positions G60 to N64 are G2. The interval D81–G84 is G3. GTP contacts are provided by residues D81 to H85 and N136 to D139. The G4 stretch occupies residues N136–D139. The interval S174–L176 is G5.

The protein belongs to the TRAFAC class translation factor GTPase superfamily. Classic translation factor GTPase family. EF-Tu/EF-1A subfamily. In terms of assembly, monomer.

Its subcellular location is the cytoplasm. It catalyses the reaction GTP + H2O = GDP + phosphate + H(+). Functionally, GTP hydrolase that promotes the GTP-dependent binding of aminoacyl-tRNA to the A-site of ribosomes during protein biosynthesis. The chain is Elongation factor Tu from Lactococcus lactis subsp. lactis (strain IL1403) (Streptococcus lactis).